A 209-amino-acid chain; its full sequence is UPF0319 protein VFMJ11_1730 (209 aa).

The signal sequence occupies residues 1 to 21 (MKIQSIFAASFCLLSSISAHA).

The protein belongs to the UPF0319 family.

The protein is UPF0319 protein VFMJ11_1730 of Aliivibrio fischeri (strain MJ11) (Vibrio fischeri).